A 660-amino-acid polypeptide reads, in one-letter code: ATPase WRNIP1 (660 aa).

A UBZ4-type zinc finger spans residues 17 to 44 (QVQCPVCQQMMPAAHINSHLDRCLLLHP). Zn(2+)-binding residues include cysteine 20, cysteine 23, histidine 31, histidine 35, and cysteine 39. The tract at residues 48–191 (AEPAAGSHRA…DDPGHWDADA (144 aa)) is disordered. Phosphoserine occurs at positions 65 and 75. Polar residues predominate over residues 76 to 89 (ESSALKQPATPTAA). Lysine 81 participates in a covalent cross-link: Glycyl lysine isopeptide (Lys-Gly) (interchain with G-Cter in ubiquitin). Threonine 85 bears the Phosphothreonine mark. Residues serine 91 and serine 92 each carry the phosphoserine modification. Residues 92–104 (SEGEGEEGDDGGE) are compositionally biased toward acidic residues. Threonine 116 is subject to Phosphothreonine. The span at 135–155 (ARKGMGKRPAAAAAAGSASPR) shows a compositional bias: low complexity. A Glycyl lysine isopeptide (Lys-Gly) (interchain with G-Cter in ubiquitin) cross-link involves residue lysine 141. Residue serine 153 is modified to Phosphoserine. Over residues 159–182 (EAEAQEEEEAGVDGDGDADVDGED) the composition is skewed to acidic residues. Residue lysine 220 forms a Glycyl lysine isopeptide (Lys-Gly) (interchain with G-Cter in ubiquitin) linkage. 265–271 (PGCGKTT) is an ATP binding site. Glycyl lysine isopeptide (Lys-Gly) (interchain with G-Cter in ubiquitin) cross-links involve residues lysine 296, lysine 305, lysine 311, lysine 317, and lysine 330. Residue lysine 477 forms a Glycyl lysine isopeptide (Lys-Gly) (interchain with G-Cter in SUMO2); alternate linkage. Lysine 477 is covalently cross-linked (Glycyl lysine isopeptide (Lys-Gly) (interchain with G-Cter in ubiquitin); alternate). Phosphotyrosine is present on residues tyrosine 529 and tyrosine 557. A Glycyl lysine isopeptide (Lys-Gly) (interchain with G-Cter in ubiquitin) cross-link involves residue lysine 622. Lysine 628 participates in a covalent cross-link: Glycyl lysine isopeptide (Lys-Gly) (interchain with G-Cter in ubiquitin); alternate. Lysine 628 bears the N6-acetyllysine; alternate mark. A Glycyl lysine isopeptide (Lys-Gly) (interchain with G-Cter in ubiquitin) cross-link involves residue lysine 631.

This sequence belongs to the AAA ATPase family. RarA/MGS1/WRNIP1 subfamily. Forms homooligomers, possibly octamers. Directly interacts with POLD1, POLD2 and POLD4. Interacts with the N-terminal domain of WRN. Interacts (via UBZ4-type zinc finger) with monoubiquitin and polyubiquitin. Interacts with TRIM14 and PPP6C; these interactions positively regulate the RIGI signaling pathway. In terms of processing, sumoylated with SUMO1 and SUMO2/3. In terms of tissue distribution, ubiquitously expressed.

The protein resides in the nucleus. The protein localises to the cytoplasm. It carries out the reaction ATP + H2O = ADP + phosphate + H(+). In terms of biological role, functions as a modulator of initiation or reinitiation events during DNA polymerase delta-mediated DNA synthesis. In the presence of ATP, stimulation of DNA polymerase delta-mediated DNA synthesis is decreased. Also plays a role in the innate immune defense against viruses. Stabilizes the RIGI dsRNA interaction and promotes RIGI 'Lys-63'-linked polyubiquitination. In turn, RIGI transmits the signal through mitochondrial MAVS. The polypeptide is ATPase WRNIP1 (Mus musculus (Mouse)).